The following is a 138-amino-acid chain: Protein X (138 aa).

The disordered stretch occupies residues E24–A48. Positions P68–L113 are mitochondrial targeting sequence.

This sequence belongs to the orthohepadnavirus protein X family. As to quaternary structure, may form homodimer. May interact with host CEBPA, CFLAR, CREB1, DDB1, E4F1, HBXIP, HSPD1/HSP60, NFKBIA, POLR2E and SMAD4. Interacts with host SMC5-SMC6 complex and induces its degradation. Interacts with host TRPC4AP; leading to prevent ubiquitination of TRPC4AP. Interacts with host PLSCR1; this interaction promotes ubiquitination and degradation of HBx and impairs HBx-mediated cell proliferation. A fraction may be phosphorylated in insect cells and HepG2 cells, a human hepatoblastoma cell line. Phosphorylated in vitro by host protein kinase C or mitogen-activated protein kinase. N-acetylated in insect cells.

Its subcellular location is the host cytoplasm. It localises to the host nucleus. The protein resides in the host mitochondrion. Functionally, multifunctional protein that plays a role in silencing host antiviral defenses and promoting viral transcription. Does not seem to be essential for HBV infection. May be directly involved in development of cirrhosis and liver cancer (hepatocellular carcinoma). Most of cytosolic activities involve modulation of cytosolic calcium. The effect on apoptosis is controversial depending on the cell types in which the studies have been conducted. May induce apoptosis by localizing in mitochondria and causing loss of mitochondrial membrane potential. May also modulate apoptosis by binding host CFLAR, a key regulator of the death-inducing signaling complex (DISC). Promotes viral transcription by using the host E3 ubiquitin ligase DDB1 to target the SMC5-SMC6 complex to proteasomal degradation. This host complex would otherwise bind to viral episomal DNA, and prevents its transcription. Moderately stimulates transcription of many different viral and cellular transcription elements. Promoters and enhancers stimulated by HBx contain DNA binding sites for NF-kappa-B, AP-1, AP-2, c-EBP, ATF/CREB, or the calcium-activated factor NF-AT. In Arctic squirrel hepatitis virus (ASHV), this protein is Protein X.